Consider the following 557-residue polypeptide: MSLEEQQSDDPAELESGVSRGDELAELLGDLVVGREEHLNAPGLVIRPDEVQDALFKLRDEAGFDHLSCVTAQEYEDRYESIYHLTKFDDRTDEVSVVVPTSKDNPVSQSAEPVFRTADWHEREAYDLVGIQYEDHPDLRRILLPETWQGHPLGLDYDQDRPQIATLREHANPLEEDHRAGDSNTMYINIGPHHPATHGVLHVETVVDGEQVVDLESDIGYLHRCEEQMCQQGTYRHQIMPYPDRWDYISSGLLNEWAYARAAEDLADIEVPEYAQIIRTMGAELCRIASHMIALGTFALDVYGDFTAIFMYAMRDREIVQNILEDLTGQRMMFNYFRLGGVVWDLPEPREEFFEKIRDFMDGLPQALEEYHDMITSNEILQARTVGTGVLSPEVAKSYGATGPVARGSGIDYDLRRDDSYGYYDELEWDVVVEDGCDNFSRLLVRMREVEESAKIIQQCVDLLEDWPEDERNIQANVPRTLKPDEDTEIYRAVEGAKGELGIYIRADGTDKPARFKIRSPCFSNLQTLPEMSEGEYIPDMIASLGSLDIVLGEVDR.

Acidic residues predominate over residues 1–13 (MSLEEQQSDDPAE). The interval 1-20 (MSLEEQQSDDPAELESGVSR) is disordered. The NADH dehydrogenase I subunit C stretch occupies residues 1 to 174 (MSLEEQQSDD…ATLREHANPL (174 aa)). Residues 184–557 (NTMYINIGPH…LDIVLGEVDR (374 aa)) are NADH dehydrogenase I subunit D. Lysine 517 participates in a covalent cross-link: Glycyl lysine isopeptide (Lys-Gly) (interchain with G-Cter in SAMP2).

This sequence in the N-terminal section; belongs to the complex I 30 kDa subunit family. It in the C-terminal section; belongs to the complex I 49 kDa subunit family. NDH-1 is composed of 13 different subunits. Subunits NuoB, CD, E, F, and G constitute the peripheral sector of the complex.

The protein resides in the cell membrane. The enzyme catalyses a quinone + NADH + 5 H(+)(in) = a quinol + NAD(+) + 4 H(+)(out). Functionally, NDH-1 shuttles electrons from NADH, via FMN and iron-sulfur (Fe-S) centers, to quinones in the respiratory chain. Couples the redox reaction to proton translocation (for every two electrons transferred, four hydrogen ions are translocated across the cytoplasmic membrane), and thus conserves the redox energy in a proton gradient. In Haloferax volcanii (strain ATCC 29605 / DSM 3757 / JCM 8879 / NBRC 14742 / NCIMB 2012 / VKM B-1768 / DS2) (Halobacterium volcanii), this protein is NADH-quinone oxidoreductase subunit C/D (nuoCD).